The following is an 89-amino-acid chain: DNA-binding protein HU (89 aa).

Belongs to the bacterial histone-like protein family. In terms of assembly, homodimer. The dimer interacts with the DNA mimic protein DMP12. It also interacts with the monomeric form of the DNA mimic protein DMP19 with 1:1 stoichiometry.

With respect to regulation, activity is regulated by the DNA mimic protein DMP12. Activity is inhibited in the presence of the DNA mimic protein DMP19, which interacts with HU and prevents the binding of HU to DNA. Functionally, histone-like DNA-binding protein which is capable of wrapping DNA to stabilize it, and thus to prevent its denaturation under extreme environmental conditions. The protein is DNA-binding protein HU of Neisseria meningitidis serogroup B (strain ATCC BAA-335 / MC58).